The primary structure comprises 184 residues: Large ribosomal subunit protein uL5 (184 aa).

It belongs to the universal ribosomal protein uL5 family. As to quaternary structure, part of the 50S ribosomal subunit; part of the 5S rRNA/L5/L18/L25 subcomplex. Contacts the 5S rRNA and the P site tRNA. Forms a bridge to the 30S subunit in the 70S ribosome.

This is one of the proteins that bind and probably mediate the attachment of the 5S RNA into the large ribosomal subunit, where it forms part of the central protuberance. In the 70S ribosome it contacts protein S13 of the 30S subunit (bridge B1b), connecting the 2 subunits; this bridge is implicated in subunit movement. Contacts the P site tRNA; the 5S rRNA and some of its associated proteins might help stabilize positioning of ribosome-bound tRNAs. This Ureaplasma urealyticum serovar 10 (strain ATCC 33699 / Western) protein is Large ribosomal subunit protein uL5.